The chain runs to 262 residues: Ornithine carbamoyltransferase (262 aa).

Residues 3–7 (STRTR), glutamine 30, arginine 54, and 81–84 (HPTQ) each bind carbamoyl phosphate. Residues asparagine 114, aspartate 178, and 182–183 (SM) each bind L-ornithine. Residues 219–222 (HCLP) and threonine 247 each bind carbamoyl phosphate.

This sequence belongs to the aspartate/ornithine carbamoyltransferase superfamily. OTCase family.

Its subcellular location is the cytoplasm. The catalysed reaction is carbamoyl phosphate + L-ornithine = L-citrulline + phosphate + H(+). It functions in the pathway amino-acid biosynthesis; L-arginine biosynthesis; L-arginine from L-ornithine and carbamoyl phosphate: step 1/3. In terms of biological role, reversibly catalyzes the transfer of the carbamoyl group from carbamoyl phosphate (CP) to the N(epsilon) atom of ornithine (ORN) to produce L-citrulline. The protein is Ornithine carbamoyltransferase (argF) of Neisseria polysaccharea.